We begin with the raw amino-acid sequence, 209 residues long: Segregation and condensation protein B (209 aa).

It belongs to the ScpB family. In terms of assembly, homodimer. Homodimerization may be required to stabilize the binding of ScpA to the Smc head domains. Component of a cohesin-like complex composed of ScpA, ScpB and the Smc homodimer, in which ScpA and ScpB bind to the head domain of Smc. The presence of the three proteins is required for the association of the complex with DNA.

The protein localises to the cytoplasm. In terms of biological role, participates in chromosomal partition during cell division. May act via the formation of a condensin-like complex containing Smc and ScpA that pull DNA away from mid-cell into both cell halves. This chain is Segregation and condensation protein B, found in Geobacillus thermodenitrificans (strain NG80-2).